The following is a 254-amino-acid chain: Glycerol operon regulatory protein (254 aa).

The HTH iclR-type domain occupies 5–67; that stretch reads IQSLERAAAM…PASGRYQLGA (63 aa). Residues 27-46 constitute a DNA-binding region (H-T-H motif); sequence LSDIASTLGLAKGTAHGILR. One can recognise an IclR-ED domain in the interval 82–251; that stretch reads LRARALVWTD…AAAVSRDLGA (170 aa).

Functionally, may be an activator protein for the gylABX operon. This Streptomyces griseus protein is Glycerol operon regulatory protein (gylR).